Consider the following 209-residue polypeptide: MEEAKHNEAEEAQGIEAREAKQIEAGETSRSSRKLITFEPKLVINKGISVLGFVLRLFAVFGTIGSALAMGTTHESVVSLSQLVLLKVKYSDLPTLMFFVVANAISGGYLVLSLPVSIFHIFSTQAKTSRIILLVVDTVMLALVSSGASAATATVYLAHEGNTTANWPPICQQFDGFCERISGSLIGSFCAVILLMLIVINSAISLSRH.

A disordered region spans residues 1 to 26 (MEEAKHNEAEEAQGIEAREAKQIEAG). Topologically, residues 1–49 (MEEAKHNEAEEAQGIEAREAKQIEAGETSRSSRKLITFEPKLVINKGIS) are cytoplasmic. Residues 50 to 70 (VLGFVLRLFAVFGTIGSALAM) form a helical membrane-spanning segment. The Extracellular portion of the chain corresponds to 71 to 95 (GTTHESVVSLSQLVLLKVKYSDLPT). Residues 96–116 (LMFFVVANAISGGYLVLSLPV) form a helical membrane-spanning segment. Topologically, residues 117 to 130 (SIFHIFSTQAKTSR) are cytoplasmic. Residues 131–151 (IILLVVDTVMLALVSSGASAA) form a helical membrane-spanning segment. Over 152-183 (TATVYLAHEGNTTANWPPICQQFDGFCERISG) the chain is Extracellular. An N-linked (GlcNAc...) asparagine glycan is attached at Asn-162. A helical membrane pass occupies residues 184-204 (SLIGSFCAVILLMLIVINSAI). Over 205–209 (SLSRH) the chain is Cytoplasmic.

This sequence belongs to the Casparian strip membrane proteins (CASP) family. As to quaternary structure, homodimer and heterodimers. As to expression, expressed in the root endodermis.

It localises to the cell membrane. The polypeptide is CASP-like protein 1A1 (Arabidopsis thaliana (Mouse-ear cress)).